A 390-amino-acid polypeptide reads, in one-letter code: Digeranylgeranylglycerophospholipid reductase (390 aa).

Residues alanine 18, glutamate 37, cysteine 48, alanine 49, alanine 51, arginine 98, valine 122, aspartate 278, glycine 290, and isoleucine 291 each coordinate FAD. Valine 368 serves as a coordination point for a 2,3-bis-O-(geranylgeranyl)-sn-glycerol 1-phospholipid.

It belongs to the geranylgeranyl reductase family. DGGGPL reductase subfamily. Requires FAD as cofactor.

It catalyses the reaction a 2,3-bis-O-phytanyl-sn-glycerol 1-phospholipid + 8 A = a 2,3-bis-O-(geranylgeranyl)-sn-glycerol 1-phospholipid + 8 AH2. It carries out the reaction 2,3-bis-O-(phytanyl)-sn-glycerol 1-phosphate + 8 A = 2,3-bis-O-(geranylgeranyl)-sn-glycerol 1-phosphate + 8 AH2. The catalysed reaction is CDP-2,3-bis-O-(geranylgeranyl)-sn-glycerol + 8 AH2 = CDP-2,3-bis-O-(phytanyl)-sn-glycerol + 8 A. The enzyme catalyses archaetidylserine + 8 AH2 = 2,3-bis-O-phytanyl-sn-glycero-3-phospho-L-serine + 8 A. Its pathway is membrane lipid metabolism; glycerophospholipid metabolism. Functionally, is involved in the reduction of 2,3-digeranylgeranylglycerophospholipids (unsaturated archaeols) into 2,3-diphytanylglycerophospholipids (saturated archaeols) in the biosynthesis of archaeal membrane lipids. Catalyzes the formation of archaetidic acid (2,3-di-O-phytanyl-sn-glyceryl phosphate) from 2,3-di-O-geranylgeranylglyceryl phosphate (DGGGP) via the hydrogenation of each double bond of the isoprenoid chains. Is also probably able to reduce double bonds of geranyl groups in CDP-2,3-bis-O-(geranylgeranyl)-sn-glycerol and archaetidylserine, thus acting at various stages in the biosynthesis of archaeal membrane lipids. This chain is Digeranylgeranylglycerophospholipid reductase, found in Methanococcus vannielii (strain ATCC 35089 / DSM 1224 / JCM 13029 / OCM 148 / SB).